The sequence spans 214 residues: Holliday junction branch migration complex subunit RuvA (214 aa).

The interval 1–68 (MIGFLQGKVL…QPKPVLIGFD (68 aa)) is domain I. Positions 69–146 (SAEEKDFFQL…RFLLAADEAG (78 aa)) are domain II. The tract at residues 147-160 (AGDGVSKTGTPSLP) is flexible linker. A domain III region spans residues 161–214 (IQKAIDQVVDVLVQQLGHTPSAAKMMVAQALDRDPEIMTPEALFDEVYKGDVDA).

It belongs to the RuvA family. In terms of assembly, homotetramer. Forms an RuvA(8)-RuvB(12)-Holliday junction (HJ) complex. HJ DNA is sandwiched between 2 RuvA tetramers; dsDNA enters through RuvA and exits via RuvB. An RuvB hexamer assembles on each DNA strand where it exits the tetramer. Each RuvB hexamer is contacted by two RuvA subunits (via domain III) on 2 adjacent RuvB subunits; this complex drives branch migration. In the full resolvosome a probable DNA-RuvA(4)-RuvB(12)-RuvC(2) complex forms which resolves the HJ.

Its subcellular location is the cytoplasm. In terms of biological role, the RuvA-RuvB-RuvC complex processes Holliday junction (HJ) DNA during genetic recombination and DNA repair, while the RuvA-RuvB complex plays an important role in the rescue of blocked DNA replication forks via replication fork reversal (RFR). RuvA specifically binds to HJ cruciform DNA, conferring on it an open structure. The RuvB hexamer acts as an ATP-dependent pump, pulling dsDNA into and through the RuvAB complex. HJ branch migration allows RuvC to scan DNA until it finds its consensus sequence, where it cleaves and resolves the cruciform DNA. This Desulforapulum autotrophicum (strain ATCC 43914 / DSM 3382 / VKM B-1955 / HRM2) (Desulfobacterium autotrophicum) protein is Holliday junction branch migration complex subunit RuvA.